Consider the following 414-residue polypeptide: MSAKRNTKLRHAPLEHAYVDDKSVRRNKRSKQRGRMQDDESVDAPLNEKQAQVIARQAQLQQNEEDVSDSEQTGQPVDIDVPSDDEGQADDLAQPEDAYRHFEIDEHDEVALRAFMPAEPAQRRTLADIIMEKIQGKRTEVASQVSQTGPRELNPKVIEVYQGVGQVLSRYRSGKLPKAFKIIPRLKNWEEIVYITEPENWTAASMYAATRLFASNLKEKMAQRFYNLILLPRVRDDIAEYKRLNFHLYQAIKKAIFKPGAFFKGFLLPLCEAGDCTLREAVIIGGILVRKSIPVLHSSAAMLKMAEMPYSGATSIFLRVLLDKKYSLPFRVVDAVVAHFYRFNADHRQLPVLWHQCLLVFVQRYKEDITSEQKRALLDVLRSHNHYAITPEIRRELVQSKSRDREMPLEESSR.

Residues 1–11 (MSAKRNTKLRH) show a composition bias toward basic residues. The tract at residues 1–91 (MSAKRNTKLR…PSDDEGQADD (91 aa)) is disordered. Positions 12–24 (APLEHAYVDDKSV) are enriched in basic and acidic residues. Positions 25–34 (RRNKRSKQRG) are enriched in basic residues.

This sequence belongs to the bystin family.

It is found in the nucleus. The protein resides in the nucleolus. In terms of biological role, required for processing of 20S pre-rRNA precursor and biogenesis of 40S ribosomal subunits. The sequence is that of Bystin (bysl) from Monosiga brevicollis (Choanoflagellate).